The chain runs to 367 residues: Aminomethyltransferase (367 aa).

Belongs to the GcvT family. In terms of assembly, the glycine cleavage system is composed of four proteins: P, T, L and H.

It catalyses the reaction N(6)-[(R)-S(8)-aminomethyldihydrolipoyl]-L-lysyl-[protein] + (6S)-5,6,7,8-tetrahydrofolate = N(6)-[(R)-dihydrolipoyl]-L-lysyl-[protein] + (6R)-5,10-methylene-5,6,7,8-tetrahydrofolate + NH4(+). The glycine cleavage system catalyzes the degradation of glycine. This is Aminomethyltransferase from Saccharopolyspora erythraea (strain ATCC 11635 / DSM 40517 / JCM 4748 / NBRC 13426 / NCIMB 8594 / NRRL 2338).